A 420-amino-acid chain; its full sequence is MKTLIARHKAGEHIGICSVCSAHPLVIEAALAFDRNSTRKVLIEATSNQVNQFGGYTGMTPADFREFVFTIADKVGFARERIILGGDHLGPNCWQQENADAAMEKSVELVKAYVRAGFSKIHLDASMSCAGDPIPLAPETVAERAAVLCFAAESVATDCQREQLSYVIGTEVPVPGGEASAIQSVHITHVEDAANTLRTHQKAFIARGLTEALTRVIAIVVQPGVEFDHSNIIHYQPQEAQALAQWIENTRMVYEAHSTDYQTRTAYWELVRDHFAILKVGPALTFALREAIFALAQIEQELIAPENRSGCLAVIEEVMLDEPQYWKKYYRTGFNDSLLDIRYSLSDRIRYYWPHSRIKNSVETMMVNLEGVDTPLGMISQYLPKQFERIQSGELSAIPHQLIMDKIYDVLRAYRYGCAE.

The protein belongs to the GatZ/KbaZ family. GatZ subfamily. Forms a complex with GatY.

Its pathway is carbohydrate metabolism; D-tagatose 6-phosphate degradation; D-glyceraldehyde 3-phosphate and glycerone phosphate from D-tagatose 6-phosphate: step 2/2. Functionally, component of the tagatose-1,6-bisphosphate aldolase GatYZ that is required for full activity and stability of the Y subunit. Could have a chaperone-like function for the proper and stable folding of GatY. When expressed alone, GatZ does not show any aldolase activity. Is involved in the catabolism of galactitol. The chain is D-tagatose-1,6-bisphosphate aldolase subunit GatZ from Escherichia coli O8 (strain IAI1).